Here is a 369-residue protein sequence, read N- to C-terminus: Olfactory receptor 2T1 (369 aa).

Topologically, residues 1-76 (MWQEYYFLNV…LFNRKETSGL (76 aa)) are extracellular. N56 is a glycosylation site (N-linked (GlcNAc...) asparagine). The helical transmembrane segment at 77 to 97 (IFAIISIIFFTALMANGVMIF) threads the bilayer. The Cytoplasmic portion of the chain corresponds to 98–107 (LIQTDLRLHT). Residues 108–128 (PMYFLLSHLSLIDMMYISTIV) traverse the membrane as a helical segment. The Extracellular portion of the chain corresponds to 129 to 148 (PKMLVNYLLDQRTISFVGCT). An intrachain disulfide couples C147 to C239. A helical membrane pass occupies residues 149 to 169 (AQHFLYLTLVGAEFFLLGLMA). Topologically, residues 170-191 (YDRYVAICNPLRYPVLMSRRVC) are cytoplasmic. The helical transmembrane segment at 192–212 (WMIIAGSWFGGSLDGFLLTPI) threads the bilayer. Residues 213-247 (TMSFPFCNSREINHFFCEAPAVLKLACADTALYET) are Extracellular-facing. The chain crosses the membrane as a helical span at residues 248–268 (VMYVCCVLMLLIPFSVVLASY). Over 269–286 (ARILTTVQCMSSVEGRKK) the chain is Cytoplasmic. A helical membrane pass occupies residues 287–307 (AFATCSSHMTVVSLFYGAAMY). Topologically, residues 308–321 (TYMLPHSYHKPAQD) are extracellular. The chain crosses the membrane as a helical span at residues 322–342 (KVLSVFYTILTPMLNPLIYSL). Residues 343 to 369 (RNKDVTGALKRALGRFKGPQRVSGGVF) are Cytoplasmic-facing.

This sequence belongs to the G-protein coupled receptor 1 family.

It is found in the cell membrane. Its function is as follows. Odorant receptor. The sequence is that of Olfactory receptor 2T1 (OR2T1) from Homo sapiens (Human).